The sequence spans 62 residues: Translational regulator CsrA 3 (62 aa).

It belongs to the CsrA/RsmA family. As to quaternary structure, homodimer; the beta-strands of each monomer intercalate to form a hydrophobic core, while the alpha-helices form wings that extend away from the core.

It localises to the cytoplasm. A key translational regulator that binds mRNA to regulate translation initiation and/or mRNA stability. Mediates global changes in gene expression, shifting from rapid growth to stress survival by linking envelope stress, the stringent response and the catabolite repression systems. Usually binds in the 5'-UTR; binding at or near the Shine-Dalgarno sequence prevents ribosome-binding, repressing translation, binding elsewhere in the 5'-UTR can activate translation and/or stabilize the mRNA. Its function is antagonized by small RNA(s). This chain is Translational regulator CsrA 3, found in Pseudomonas syringae pv. tomato (strain ATCC BAA-871 / DC3000).